Consider the following 313-residue polypeptide: Porphobilinogen deaminase (313 aa).

An S-(dipyrrolylmethanemethyl)cysteine modification is found at cysteine 241.

It belongs to the HMBS family. Monomer. It depends on dipyrromethane as a cofactor.

It catalyses the reaction 4 porphobilinogen + H2O = hydroxymethylbilane + 4 NH4(+). The protein operates within porphyrin-containing compound metabolism; protoporphyrin-IX biosynthesis; coproporphyrinogen-III from 5-aminolevulinate: step 2/4. Tetrapolymerization of the monopyrrole PBG into the hydroxymethylbilane pre-uroporphyrinogen in several discrete steps. The sequence is that of Porphobilinogen deaminase from Sulfurimonas denitrificans (strain ATCC 33889 / DSM 1251) (Thiomicrospira denitrificans (strain ATCC 33889 / DSM 1251)).